Reading from the N-terminus, the 347-residue chain is Anthranilate phosphoribosyltransferase (347 aa).

5-phospho-alpha-D-ribose 1-diphosphate contacts are provided by residues G88, 91–92, T96, 98–101, 116–124, and S128; these read GD, NIST, and KHGNRSVSS. G88 lines the anthranilate pocket. Residue S100 coordinates Mg(2+). N119 is an anthranilate binding site. R174 serves as a coordination point for anthranilate. Residues D232 and E233 each contribute to the Mg(2+) site.

It belongs to the anthranilate phosphoribosyltransferase family. As to quaternary structure, homodimer. Mg(2+) serves as cofactor.

The enzyme catalyses N-(5-phospho-beta-D-ribosyl)anthranilate + diphosphate = 5-phospho-alpha-D-ribose 1-diphosphate + anthranilate. It functions in the pathway amino-acid biosynthesis; L-tryptophan biosynthesis; L-tryptophan from chorismate: step 2/5. Catalyzes the transfer of the phosphoribosyl group of 5-phosphorylribose-1-pyrophosphate (PRPP) to anthranilate to yield N-(5'-phosphoribosyl)-anthranilate (PRA). This chain is Anthranilate phosphoribosyltransferase, found in Shewanella oneidensis (strain ATCC 700550 / JCM 31522 / CIP 106686 / LMG 19005 / NCIMB 14063 / MR-1).